The sequence spans 370 residues: Cytochrome b (370 aa).

4 helical membrane passes run 25 to 45 (FGSM…FLAV), 69 to 90 (WMMQ…YIHI), 105 to 125 (WFSG…GYVL), and 170 to 190 (FFAL…LHIL). Heme b is bound by residues histidine 75 and histidine 89. Positions 174 and 188 each coordinate heme b. Histidine 193 is a binding site for a ubiquinone. A run of 4 helical transmembrane segments spans residues 218 to 238 (YKDM…VSFF), 280 to 300 (LGGA…PFTH), 312 to 332 (FMQL…WTAT), and 339 to 358 (FTTI…ISNP).

The protein belongs to the cytochrome b family. The cytochrome bc1 complex contains 3 respiratory subunits (MT-CYB, CYC1 and UQCRFS1), 2 core proteins (UQCRC1 and UQCRC2) and probably 6 low-molecular weight proteins. It depends on heme b as a cofactor.

The protein localises to the mitochondrion inner membrane. Functionally, component of the ubiquinol-cytochrome c reductase complex (complex III or cytochrome b-c1 complex) that is part of the mitochondrial respiratory chain. The b-c1 complex mediates electron transfer from ubiquinol to cytochrome c. Contributes to the generation of a proton gradient across the mitochondrial membrane that is then used for ATP synthesis. In Chilabothrus strigilatus mccraniei (Ragged Island boa constrictor), this protein is Cytochrome b (MT-CYB).